The following is a 505-amino-acid chain: Histidine ammonia-lyase (505 aa).

Residues 141-143 (ASG) constitute a cross-link (5-imidazolinone (Ala-Gly)). S142 is subject to 2,3-didehydroalanine (Ser).

Belongs to the PAL/histidase family. Post-translationally, contains an active site 4-methylidene-imidazol-5-one (MIO), which is formed autocatalytically by cyclization and dehydration of residues Ala-Ser-Gly.

The protein resides in the cytoplasm. It carries out the reaction L-histidine = trans-urocanate + NH4(+). Its pathway is amino-acid degradation; L-histidine degradation into L-glutamate; N-formimidoyl-L-glutamate from L-histidine: step 1/3. The polypeptide is Histidine ammonia-lyase (Bacillus cytotoxicus (strain DSM 22905 / CIP 110041 / 391-98 / NVH 391-98)).